A 520-amino-acid chain; its full sequence is O-methyltransferase cicE (520 aa).

S-adenosyl-L-methionine contacts are provided by residues 300–301 (GG), Asp323, 355–356 (NF), and Arg371.

This sequence belongs to the class I-like SAM-binding methyltransferase superfamily. Cation-independent O-methyltransferase family.

The protein operates within phytotoxin biosynthesis. Its function is as follows. O-methyltransferase; part of the gene cluster that mediates the biosynthesis of cichorine, a phytotoxin active against knapweed, corn, and soybeans. The first step in the pathway is performed by the non-reducing polyketide synthase pkbA that condenses one acetyl-CoA starter unit with 3 malonyl-CoA units. PkbA also catalyzes one methylation step to produce 3-methylorsellinate. The nonribosomal peptide synthase-like protein cicB, the cytochrome P450 monooxygenase cicH and the O-methyltransferase cicE are involved in the conversion of 3-methylorsellinate into nidulol. CicB converts 3-methylorsellinate to a yet unidentified intermediate, cicH may play a ring-closing role for cichorine and cicE is plausibly responsible for the methylation of one of the phenol groups. The oxidoreductase cicC acts downstream with still unidentified enzymes to further convert nidulol into cichorine. This Emericella nidulans (strain FGSC A4 / ATCC 38163 / CBS 112.46 / NRRL 194 / M139) (Aspergillus nidulans) protein is O-methyltransferase cicE.